Consider the following 255-residue polypeptide: Hemin import ATP-binding protein HmuV (255 aa).

In terms of domain architecture, ABC transporter spans 2 to 238 (LDVEGLHLKR…AALNAVFGID (237 aa)). 34–41 (GPNGAGKS) contributes to the ATP binding site.

It belongs to the ABC transporter superfamily. Heme (hemin) importer (TC 3.A.1.14.5) family. As to quaternary structure, the complex is composed of two ATP-binding proteins (HmuV), two transmembrane proteins (HmuU) and a solute-binding protein (HmuT).

It is found in the cell inner membrane. Part of the ABC transporter complex HmuTUV involved in hemin import. Responsible for energy coupling to the transport system. This chain is Hemin import ATP-binding protein HmuV, found in Pseudomonas entomophila (strain L48).